The sequence spans 2166 residues: MSLRLQNPFLSTPLLHGSFNRREKRINVARRAFRSKRIYSEKKQNDWLAKVAKFSQFCGKNVQLLRKSLDSRSRMEVKCLKEPFVRSKDLVRSLAPVWEEGLFFLRCSVFFAVISGVCLLVWYGQNKARVFVETKLLPSVCSVLSETIQREVDFGKVRRVSPLCITLEASSIGPHGEEFSCGEVPTMKVCVRPFASLRRGKIVVDAILSNPTVLVAQKKDFTWLGIPLSDTTLPSHLSSEEGIDFRTKTRRVSREEAGIRWDEERDNDARKAAEIGYIVPCKNYSQAKDNAVKHDRRFTEIANPNSFICMDEKMHSAEQHCMDPGVEYDVKHAELEKSFGIKIPGSGLKFLSKMLKVPRKYKFKWNSKSHKNSMSNISAKKRILERSASAALSYFHSLSQQKLDEPSVLSTNYDGLSLDMLLVKGDREISNQYDRHVPYGEQSLANDLDGKGYRVRGKRLLGVKKASTLDKFTVSCDPFLMTVDRLCALLQTKRSPSVEDIVNSSESETLSSQRGDISMNVVNQNTDDVPHGNRSGNQPRDFTFKKHEHQPVANHWRPSWPRNKKLKEAVFNILTGSSKKLTGRADPNAPHLSDELEKLPAVYVEKTLPVMLDSVQFKGGTLLLLAYGDTEPREMRNVHGHVKFQNHYGRVYVQLGGNCNMWRSDVTSEDGGLLSVDVFVDTVEQNWHANLNVANFFVPIFERILEIPIEWSKGRATGEVHLCMSRGESFPNLHGQLDVTGLGFHINDAPSSFSDVSASLSFRGQRIFLHNANGWFGKVPLEASGDFGIHPDEGEFHLMCQVPYVEINALMKTFKMKPLFFPLAGSVTAVFNCQGPLDAPVFVGSCMVSRKIAYLSPDLPTSLAYEAMLKNKEAGAVAAFDRVPFSYLSANFTFNTDNCVADLYGIRATLVDGGEIRGAGNAWICPEGEVDDTALDVNFSGNISFDKVLHRYMPEYFNIGMLKLGDLTGETKLSGALLKPRFDIKWAAPKADGSLTDARGDIVISHDNIIVNSSSVAFDLFTKLDTSYHDPCLSHQDFTQGEAMPFVVEGLDLDLRMRGFEFFSLVSSYPFDSPRPTHLKATGRIKFLGKIKRHSTTKDGDVGSDKCEDAAAISSLDGDISISSLKLNQLILAPQLSGRLSVSRDHVKLDAAGRPDESLTLDFIGPLQPNSDENVQSGKLLSFSLQKGQLRANACFQPQQSATLEIRNFPLDELELASLRGLIQKAEIQLNLQKRRGHGLLSVIRPKFSGVLGEALDVAVRWSGDVCFMLSGRLEVMITVEKTILEQSNSRYELQGEYVLPGSRDRDLGQKEAGSFLMRAMTGHLGSVISSMGRWRMRLEVPKAEVAEMLPLARLLSRSTDPAVHSRSKDLFIQSVQNLCLQAENLRDLLEEIRGYYTPPSEVVLEDLSLPGLAELKGHWHGSLDASGGGNGDTLAEFDFHGDDWEWGTYKTQRVLATGSYNNDDGLRLKEMLIQKGNATLHADGTLLGPKTNLHFAVLNFPVSLIPTLVEVVESSATDIVHSLRKLLSPIKGILHMEGDLRGSLEKPECDVQVRLLDGAVGGIDLGRAEVFASLTSNSRFLFNSNFEPFVQNGHVHIQGSVPVSFSQKNMSEGEVSETDRGGAVKIPSWAKEKEDDEKRTSRDRSEERWDSQLAESLKGLYWNILDAGEVRLEADIKDGGMTLLTAISPYANWLQGNADIRLQVGGTVDHPVLDGSASFHRASISSPVLRKPLTNFGGTLHVKSNRLCITSLESRVSRKGKLVVKGNLPLRSNEASAGDGIELKCEVLEVRAKNFLSCQVDTQLQITGSMLQPTISGNIKLSQGEAYLPHDKGGGAAPLNRLAANQYSIPGAAINQAVSSRYFARFFGTERASSGMKFSQSTGKSNSVEKEIEEVKMKPNMDIRLSDMKLVLGPELRIMYPLILNFAVSGELELDGMAHPKFIKPKGVLTFENGDVNLVATQVRLKREHLNVAKFEPEHGLDPLLDLALVGSEWQFRVQSRASNWQDKLVVTSTRSVEQDALSPSEAAKVFESQLAESILEGDGQLAFKKLATATLGTIMPRIEGKGEFGQARWRLVYAPQIPSLLSVDPTVDPLKSLASNISFGTEVEVQLGKRLQASVVRQMKDSEMAMQWTLIYQLTSRLRVLLQSAPSKRLLFEYSATSQD.

A chloroplast-targeting transit peptide spans 1–37 (MSLRLQNPFLSTPLLHGSFNRREKRINVARRAFRSKR). The Stromal portion of the chain corresponds to 38–101 (IYSEKKQNDW…RSLAPVWEEG (64 aa)). Residues 102–122 (LFFLRCSVFFAVISGVCLLVW) traverse the membrane as a helical segment. Residues 123 to 2166 (YGQNKARVFV…LFEYSATSQD (2044 aa)) lie on the Chloroplast intermembrane side of the membrane. Residues 1611–1649 (MSEGEVSETDRGGAVKIPSWAKEKEDDEKRTSRDRSEER) form a disordered region. Positions 1631–1649 (AKEKEDDEKRTSRDRSEER) are enriched in basic and acidic residues.

It belongs to the TamB family. Part of the TIC complex, which can interact with components of the TOC complex to form a larger import complex. Interacts with the TOC complex component TOC75-3.

It localises to the plastid. The protein resides in the chloroplast inner membrane. The protein localises to the chloroplast intermembrane space. Part of the inner chloroplast membrane translocon complex (TIC) which associates with the outer chloroplast membrane translocon complex (TOC) and forms a supercomplex involved in protein precursor import into the chloroplast stroma. Required for the import of HSP93, TIC40 and RBCS protein precursors in the chloroplast stroma. Links the outer and inner membrane translocons of the chloroplast envelope. The chain is Protein TIC236, chloroplastic from Arabidopsis thaliana (Mouse-ear cress).